A 692-amino-acid polypeptide reads, in one-letter code: Protein adenylyltransferase SelO-1, mitochondrial (692 aa).

The transit peptide at 1-24 directs the protein to the mitochondrion; it reads MASVGSRLTRFYISRPGVIARRFL. 7 residues coordinate ATP: G142, G144, K176, D188, G189, R246, and R253. Catalysis depends on D337, which acts as the Proton acceptor. Mg(2+)-binding residues include N338 and D347. An ATP-binding site is contributed by D347. The disordered stretch occupies residues 637–676; that stretch reads LEQPGWMGRGGAAIPGERDETEEEGSNSSGAGARGLVPYD. Residue U690 is a non-standard amino acid, selenocysteine.

This sequence belongs to the SELO family. Mg(2+) serves as cofactor.

It localises to the mitochondrion. The enzyme catalyses L-tyrosyl-[protein] + ATP = O-(5'-adenylyl)-L-tyrosyl-[protein] + diphosphate. It catalyses the reaction L-threonyl-[protein] + ATP = 3-O-(5'-adenylyl)-L-threonyl-[protein] + diphosphate. It carries out the reaction L-seryl-[protein] + ATP = 3-O-(5'-adenylyl)-L-seryl-[protein] + diphosphate. Catalyzes the transfer of adenosine 5'-monophosphate (AMP) to Ser, Thr and Tyr residues of target proteins (AMPylation). May be a redox-active mitochondrial selenoprotein which interacts with a redox target protein. The protein is Protein adenylyltransferase SelO-1, mitochondrial of Danio rerio (Zebrafish).